The primary structure comprises 123 residues: Small ribosomal subunit protein uS12cz/uS12cy (123 aa).

Belongs to the universal ribosomal protein uS12 family. Part of the 30S ribosomal subunit.

Its subcellular location is the plastid. The protein localises to the chloroplast. Functionally, with S4 and S5 plays an important role in translational accuracy. Located at the interface of the 30S and 50S subunits. The chain is Small ribosomal subunit protein uS12cz/uS12cy (rps12-A) from Psilotum nudum (Whisk fern).